Consider the following 86-residue polypeptide: Small ribosomal subunit protein bS20 (86 aa).

Over residues 1-27 (MANSKSAKKRATQAERRRQHNASRRSM) the composition is skewed to basic residues. The interval 1-28 (MANSKSAKKRATQAERRRQHNASRRSMM) is disordered.

This sequence belongs to the bacterial ribosomal protein bS20 family.

Binds directly to 16S ribosomal RNA. The sequence is that of Small ribosomal subunit protein bS20 from Aliivibrio salmonicida (strain LFI1238) (Vibrio salmonicida (strain LFI1238)).